The chain runs to 130 residues: Small ribosomal subunit protein uS9 (130 aa).

Residues 99–130 (KRAGLLTRDPRMKERKKPGLKAARRSPQFSKR) are disordered. Residues 111–130 (KERKKPGLKAARRSPQFSKR) show a composition bias toward basic residues.

Belongs to the universal ribosomal protein uS9 family.

The protein is Small ribosomal subunit protein uS9 of Staphylococcus aureus (strain Mu3 / ATCC 700698).